Consider the following 422-residue polypeptide: Histidinol dehydrogenase (422 aa).

Positions 123, 183, and 206 each coordinate NAD(+). Residues serine 229, glutamine 251, and histidine 254 each contribute to the substrate site. Zn(2+)-binding residues include glutamine 251 and histidine 254. Residues glutamate 320 and histidine 321 each act as proton acceptor in the active site. The substrate site is built by histidine 321, aspartate 354, glutamate 408, and histidine 413. Position 354 (aspartate 354) interacts with Zn(2+). Histidine 413 contributes to the Zn(2+) binding site.

This sequence belongs to the histidinol dehydrogenase family. It depends on Zn(2+) as a cofactor.

It catalyses the reaction L-histidinol + 2 NAD(+) + H2O = L-histidine + 2 NADH + 3 H(+). It functions in the pathway amino-acid biosynthesis; L-histidine biosynthesis; L-histidine from 5-phospho-alpha-D-ribose 1-diphosphate: step 9/9. Functionally, catalyzes the sequential NAD-dependent oxidations of L-histidinol to L-histidinaldehyde and then to L-histidine. The polypeptide is Histidinol dehydrogenase (Haloarcula marismortui (strain ATCC 43049 / DSM 3752 / JCM 8966 / VKM B-1809) (Halobacterium marismortui)).